Here is a 310-residue protein sequence, read N- to C-terminus: Syndecan-1 (310 aa).

An N-terminal signal peptide occupies residues 1–22; sequence MRRAALWLWLCALALSLQPALP. At 23–254 the chain is on the extracellular side; sequence QIVATNLPPE…GLLDRKEVLG (232 aa). 2 disordered regions span residues 27 to 100 and 114 to 212; these read TNLP…EGPK and LTAR…QDFT. A compositionally biased stretch (acidic residues) spans 32 to 42; that stretch reads EDQDGSGDDSD. Serine 37 carries an O-linked (Xyl...) (chondroitin sulfate) serine glycan. N-linked (GlcNAc...) asparagine glycosylation occurs at asparagine 43. Residues serine 45 and serine 47 are each glycosylated (O-linked (Xyl...) (heparan sulfate) serine). A compositionally biased stretch (polar residues) spans 55–75; sequence ITLSQQTPSTWKDTQLLTAIP. The segment covering 117-127 has biased composition (basic and acidic residues); the sequence is REQEATPRPRE. The segment covering 128 to 151 has biased composition (low complexity); the sequence is TTQLPTTHLASTTTATTAQEPATS. The span at 153-164 shows a compositional bias: basic and acidic residues; sequence PHRDMQPGHHET. Serine 206 and serine 216 each carry an O-linked (Xyl...) (chondroitin sulfate) serine glycan. Residues 255 to 275 traverse the membrane as a helical segment; sequence GVIAGGLVGLIFAVCLVGFML. Residues 276–310 are Cytoplasmic-facing; it reads YRMKKKDEGSYSLEEPKQANGGAYQKPTKQEEFYA. A disordered region spans residues 284-310; sequence GSYSLEEPKQANGGAYQKPTKQEEFYA. Serine 285 carries the phosphoserine modification.

This sequence belongs to the syndecan proteoglycan family. As to quaternary structure, interacts with CDCP1. Interacts (via C-terminus) with TIAM1 (via PDZ domain). Interacts with MDK. Post-translationally, shedding is enhanced by a number of factors such as heparanase, thrombin or EGF. Also by stress and wound healing. PMA-mediated shedding is inhibited by TIMP3. In terms of tissue distribution, detected in placenta (at protein level). Detected in fibroblasts (at protein level).

It is found in the membrane. Its subcellular location is the secreted. The protein localises to the extracellular exosome. Its function is as follows. Cell surface proteoglycan that contains both heparan sulfate and chondroitin sulfate and that links the cytoskeleton to the interstitial matrix. Regulates exosome biogenesis in concert with SDCBP and PDCD6IP. Able to induce its own expression in dental mesenchymal cells and also in the neighboring dental epithelial cells via an MSX1-mediated pathway. The sequence is that of Syndecan-1 from Homo sapiens (Human).